Consider the following 391-residue polypeptide: Elongation factor Tu (391 aa).

Positions 10-201 (KPHVNIGTIG…AVDDYIPTPA (192 aa)) constitute a tr-type G domain. A G1 region spans residues 19-26 (GHVDHGKT). A GTP-binding site is contributed by 19-26 (GHVDHGKT). Position 26 (threonine 26) interacts with Mg(2+). Residues 55–59 (GITIS) are G2. Residues 76 to 79 (DCPG) form a G3 region. GTP contacts are provided by residues 76–80 (DCPGH) and 131–134 (NKVD). The segment at 131–134 (NKVD) is G4. A G5 region spans residues 169-171 (SAL).

This sequence belongs to the TRAFAC class translation factor GTPase superfamily. Classic translation factor GTPase family. EF-Tu/EF-1A subfamily. In terms of assembly, monomer.

It is found in the cytoplasm. It catalyses the reaction GTP + H2O = GDP + phosphate + H(+). GTP hydrolase that promotes the GTP-dependent binding of aminoacyl-tRNA to the A-site of ribosomes during protein biosynthesis. In Dinoroseobacter shibae (strain DSM 16493 / NCIMB 14021 / DFL 12), this protein is Elongation factor Tu.